Consider the following 227-residue polypeptide: Nudix hydrolase 27, chloroplastic (227 aa).

A chloroplast-targeting transit peptide spans 1 to 44 (MAVKASGFIGKSAISVHLDFSSFPVKFSCLKQFSVSSPKPLVVL). The Nudix hydrolase domain maps to 61 to 208 (GYRKNVGICL…KRPVYEHVIK (148 aa)). Positions 94–115 (GGADEGEDLRNAAFRELREETG) match the Nudix box motif. 2 residues coordinate Mn(2+): Glu-109 and Glu-113.

Belongs to the Nudix hydrolase family. The cofactor is Mg(2+). It depends on Mn(2+) as a cofactor. As to expression, expressed in roots, leaves, stems and inflorescences.

The protein localises to the plastid. It is found in the chloroplast. Its function is as follows. Mediates the hydrolysis of some nucleoside diphosphate derivatives. Can use diadenosine 5',5'''-P(1)P(5) pentaphosphate (Ap(5)A) as substrates. This is Nudix hydrolase 27, chloroplastic (NUDT27) from Arabidopsis thaliana (Mouse-ear cress).